Consider the following 127-residue polypeptide: Large ribosomal subunit protein bL19 (127 aa).

This sequence belongs to the bacterial ribosomal protein bL19 family.

Functionally, this protein is located at the 30S-50S ribosomal subunit interface and may play a role in the structure and function of the aminoacyl-tRNA binding site. This is Large ribosomal subunit protein bL19 from Synechococcus sp. (strain JA-3-3Ab) (Cyanobacteria bacterium Yellowstone A-Prime).